Consider the following 414-residue polypeptide: MQSQRIPGRKRGRPSLHSTPMKMAVHNLYSASAGSLPAVKIPKKRGRKPGYKIKSRVLMTPLALSPPRSTPEPDLSSIPQDAATVPSLAAPQALTVCLYINKQANAGPYLERKKVQQLPEHFGPERPSAVLQQAVQACIDCAHQQKLVFSLVKQGYGGEMVSVSASFDGKQHLRSLPVVNSIGYVLRFLAKLCRSLLCDDLFSHQPFPRGCSASEKVQEKEEGRMESVKTVTTEEYLVNPVGMNRYSVDTSASTFNHRGSLHPSSSLYCKRQNSGDSHLGGGPAATAGGPRTSPMSSGGPSAPGLRPPASSPKRNTTSLEGNRCASSPSQDAQDARRPRSRNPSAWTVEDVVWFVKDADPQALGPHVELFRKHEIDGNALLLLKSDMVMKYLGLKLGPALKLCYHIDKLKQAKF.

A phosphoserine mark is found at serine 55 and serine 65. Residues 257-276 are compositionally biased toward polar residues; the sequence is HRGSLHPSSSLYCKRQNSGD. The tract at residues 257 to 343 is disordered; that stretch reads HRGSLHPSSS…DARRPRSRNP (87 aa). The segment covering 284-304 has biased composition (low complexity); the sequence is AATAGGPRTSPMSSGGPSAPG. The 67-residue stretch at 288–354 folds into the SAM domain; sequence GGPRTSPMSS…AWTVEDVVWF (67 aa). Positions 312-332 are enriched in polar residues; sequence PKRNTTSLEGNRCASSPSQDA.

The protein belongs to the SCM family.

Its subcellular location is the nucleus. In terms of biological role, putative Polycomb group (PcG) protein. PcG proteins act by forming multiprotein complexes, which are required to maintain the transcriptionally repressive state of homeotic genes throughout development. The chain is Sex comb on midleg-like protein 4 (SCML4) from Homo sapiens (Human).